We begin with the raw amino-acid sequence, 695 residues long: Elongation factor G (695 aa).

The 276-residue stretch at 10–285 (DKTRNIGIMA…GVVDYLPSPL (276 aa)) folds into the tr-type G domain. GTP contacts are provided by residues 19-26 (AHIDAGKT), 83-87 (DTPGH), and 137-140 (NKMD).

The protein belongs to the TRAFAC class translation factor GTPase superfamily. Classic translation factor GTPase family. EF-G/EF-2 subfamily.

It is found in the cytoplasm. Its function is as follows. Catalyzes the GTP-dependent ribosomal translocation step during translation elongation. During this step, the ribosome changes from the pre-translocational (PRE) to the post-translocational (POST) state as the newly formed A-site-bound peptidyl-tRNA and P-site-bound deacylated tRNA move to the P and E sites, respectively. Catalyzes the coordinated movement of the two tRNA molecules, the mRNA and conformational changes in the ribosome. The sequence is that of Elongation factor G from Latilactobacillus sakei subsp. sakei (strain 23K) (Lactobacillus sakei subsp. sakei).